The chain runs to 1114 residues: MGVQGFQDYIEKHCPSAVVPVELQKLARGSLVGGGRQRPPHTPLRLLVDADNCLHRLYGGFYTDWVSGGQWNHMLGYLAALAKACFGGNIELFVFFNGALEKARLHEWVKRQGNERQTAQQIVSHVQNKGTPPPKVWFLPPVCMAHCIRLALIRFHVKVAQSIEDHHQEVIGFCRENGFHGLVAYDSDYALCNIPYYFSAHALKLSRNGKSLTTSQYLMHEVAKQLDLNPNRFPIFAALLGNHILPDEDLASFHWSLLGPEHPLASLKVRAHQLVLPPCDVVIKAVADYVRNIQDTSDLDAIAKDVFQHSQSRTDDKVIRFKRAIGYYSATSKPMAFHPPHYLARPNPFGMPGIVPPYVPPQMLNIPQTSLQAKPVAPQVPSPGAPGQGPHPYNLAEPALTLETSGKNLTEQNYSNIPHEGKHTPLYERSSPINPAPSGSPNHVDSAYFPGSSTSSSSDNDEGSGGAANHISGNKIGWEKTGSHSEPQARGDPGDQTKAEGSSTASSGSQLAEGKGNQIGTVQPIPCLLSMPTRNHMDITTPPLPPVAPEVLRVAEHRHKKGLMYPYIFHVLTKGEIKIAVSIEDEASKDLPPAALLYRPVRQYVYGVLFSLAESRKKTERLAFRKNRLPPEFSPVIIKEWAAYKGKSPQTPELVEALAFREWTCPNLKRLWLGKAVEDKNRRMRAFLACMRSDTPAMLNPASVPTHLTVLCCVLRYMVQWPGARILRRQELDAFLAQALSPKLYEPDQLQELKIENLDPRGIQLSALFMSGVDMALFANDACGQPVPWEHCCPWMYFDGKLFQSKLLKASREKTPLIDLCDGQAEQAAKVEKMRQSILEGLNFSRQSHPLPFPPPAALPFYPTSVYPRHFGPVPPAQGRGRGFAGVCGFGSPYGETVATGAYRAFRVATATGHCGAFSGSDSSRTSKSQGGIQPIPSQGGKLEIAGTVVGHWAGSRRGRGGRGPFPLQVVSVGGPARGRPRGVISTPVIRTFGRGGRYYGRGYKNQGAIQGKPPYAASAEEVAKELKSRSGESKSSAMSSDGSLAENGVVAEEKPAPQMNGSAGDTRAPSHSESALNNDSKTCNTNPHLNALSTDSGCRRADALEAAVLKKEE.

Residues Pro-339 to Leu-402 are interaction with YES1, SRC and FYN. Disordered regions lie at residues Gln-372–Ala-396 and Glu-411–Ile-519. A compositionally biased stretch (polar residues) spans Ser-431–His-443. The span at Gly-477–Lys-498 shows a compositional bias: basic and acidic residues. A compositionally biased stretch (polar residues) spans Ala-499–Gln-510. Position 651 is a phosphothreonine (Thr-651). Residues Ala-825–Glu-1114 are RNA binding. 3 positions are modified to omega-N-methylarginine: Arg-869, Arg-880, and Arg-882. Residues Phe-918–Gly-940 are disordered. Position 928 is an N6-acetyllysine (Lys-928). Positions Ser-929–Gly-940 are enriched in low complexity. A Phosphoserine modification is found at Ser-956. Arg-978 and Arg-982 each carry omega-N-methylarginine. The tract at residues Ala-1009–Cys-1099 is disordered. Ser-1019 bears the Phosphoserine mark. Basic and acidic residues predominate over residues Glu-1022–Glu-1033. Polar residues predominate over residues Ser-1034–Gly-1043. Phosphoserine occurs at positions 1040, 1041, and 1044. Residues Met-1060 to Ser-1097 are compositionally biased toward polar residues.

It belongs to the constitutive coactivator of PPAR-gamma family. In terms of assembly, interacts with PURA. Interacts with YES1, SRC, FYN. Upon tyrosine phosphorylation, interacts with PIK3R1. Post-translationally, arg-978 is dimethylated, probably to asymmetric dimethylarginine. In terms of processing, phosphorylated on tyrosine by src family kinases upon ultraviolet exposure.

The protein resides in the cytoplasm. Its subcellular location is the cell membrane. In terms of biological role, component of the oxidative stress-induced survival signaling. May regulate the activation of SRC family protein kinases. May act as a scaffolding protein enabling SRC family protein kinases to phosphorylate and activate PI3-kinase. Binds IGF2 RNA and promotes the production of IGF2 protein. The sequence is that of Constitutive coactivator of PPAR-gamma-like protein 1 (FAM120A) from Bos taurus (Bovine).